We begin with the raw amino-acid sequence, 547 residues long: Glucose-6-phosphate isomerase (547 aa).

The Proton donor role is filled by E353. Residues H384 and K512 contribute to the active site.

Belongs to the GPI family.

The protein localises to the cytoplasm. It carries out the reaction alpha-D-glucose 6-phosphate = beta-D-fructose 6-phosphate. It functions in the pathway carbohydrate biosynthesis; gluconeogenesis. The protein operates within carbohydrate degradation; glycolysis; D-glyceraldehyde 3-phosphate and glycerone phosphate from D-glucose: step 2/4. Catalyzes the reversible isomerization of glucose-6-phosphate to fructose-6-phosphate. This Pseudoalteromonas atlantica (strain T6c / ATCC BAA-1087) protein is Glucose-6-phosphate isomerase.